The sequence spans 352 residues: D-alanine--D-alanine ligase A (352 aa).

The region spanning 138-341 is the ATP-grasp domain; that stretch reads KRMVQSAGLV…PPKLVGALVE (204 aa). 165–220 is an ATP binding site; the sequence is ECLGSSTLFVKPATSGSSIGVSRVSNALEYAAAFAIAAREDTKVLVEAAVCGREIE. 3 residues coordinate Mg(2+): aspartate 295, glutamate 308, and asparagine 310.

It belongs to the D-alanine--D-alanine ligase family. It depends on Mg(2+) as a cofactor. The cofactor is Mn(2+).

Its subcellular location is the cytoplasm. The enzyme catalyses 2 D-alanine + ATP = D-alanyl-D-alanine + ADP + phosphate + H(+). Its pathway is cell wall biogenesis; peptidoglycan biosynthesis. Cell wall formation. This Pseudomonas putida (strain ATCC 47054 / DSM 6125 / CFBP 8728 / NCIMB 11950 / KT2440) protein is D-alanine--D-alanine ligase A.